The primary structure comprises 385 residues: Sesquiterpene alcohol synthase (385 aa).

Mg(2+) is bound by residues Asp123 and Asp127. Residues 123–127 (DDISD) carry the DDXXD motif motif.

Belongs to the terpene synthase family. Mg(2+) serves as cofactor. As to expression, specifically expressed in tissues lining the cuticle of the abdominal sternites of mature males.

It catalyses the reaction (2E,6E)-farnesyl diphosphate + H2O = (1S,6S,7R)-sesquipiperitol + diphosphate. It functions in the pathway pheromone biosynthesis. Its function is as follows. Sesquiterpene alcohol synthase that catalyzes the formation of (1S,6S,7R)-sesquipiperitol, a terpene intermediate in murgantiol biosynthesis, a male-released aggregation pheromone. This is Sesquiterpene alcohol synthase from Murgantia histrionica (Harlequin bug).